We begin with the raw amino-acid sequence, 119 residues long: Large ribosomal subunit protein uL24 (119 aa).

The protein belongs to the universal ribosomal protein uL24 family. As to quaternary structure, part of the 50S ribosomal subunit.

Its function is as follows. One of two assembly initiator proteins, it binds directly to the 5'-end of the 23S rRNA, where it nucleates assembly of the 50S subunit. In terms of biological role, one of the proteins that surrounds the polypeptide exit tunnel on the outside of the subunit. This Clavibacter sepedonicus (Clavibacter michiganensis subsp. sepedonicus) protein is Large ribosomal subunit protein uL24.